We begin with the raw amino-acid sequence, 416 residues long: MSEQSICQARASVMVYDDTSKKWVPIKPGQQGFSRINIYHNTASNTFRVVGVKLQDQQVVINYSIVKGLKYNQATPTFHQWRDARQVYGLNFASKEEATTFSNAMLFALNIMNSQEGGPSSQRQVQNGPSPDEMDIQRRQVMEQHQQQRQESLERRTSATGPILPPGHPSSAASAPVSCSGPPPPPPPPVPPPPTGATPPPPPPLPAGGAQGSSHDESSMSGLAAAIAGAKLRRVQRPEDASGGSSPSGTSKSDANRASSGGGGGGLMEEMNKLLAKRRKAASQSDKPAEKKEDESQMEDPSTSPSPGTRAASQPPNSSEAGRKPWERSNSVEKPVSSILSRTPSVAKSPEAKSPLQSQPHSRMKPAGSVNDMALDAFDLDRMKQEILEEVVRELHKVKEEIIDAIRQELSGISTT.

The 112-residue stretch at 1–112 (MSEQSICQAR…NAMLFALNIM (112 aa)) folds into the WH1 domain. Polar residues predominate over residues 114 to 129 (SQEGGPSSQRQVQNGP). Disordered stretches follow at residues 114–133 (SQEG…SPDE) and 141–369 (VMEQ…PAGS). The residue at position 130 (Ser-130) is a Phosphoserine. Positions 141–157 (VMEQHQQQRQESLERRT) are enriched in basic and acidic residues. A compositionally biased stretch (low complexity) spans 169 to 180 (PSSAASAPVSCS). The segment covering 181-206 (GPPPPPPPPVPPPPTGATPPPPPPLP) has biased composition (pro residues). The EVH2 block A stretch occupies residues 222-242 (GLAAAIAGAKLRRVQRPEDAS). Residues 222–413 (GLAAAIAGAK…DAIRQELSGI (192 aa)) form an EVH2 region. The KLKR signature appears at 231–234 (KLRR). Residues 242–253 (SGGSSPSGTSKS) show a composition bias toward low complexity. 2 positions are modified to phosphoserine: Ser-246 and Ser-259. Residues 265-282 (GGLMEEMNKLLAKRRKAA) are EVH2 block B. The segment covering 299–320 (EDPSTSPSPGTRAASQPPNSSE) has biased composition (polar residues). 8 positions are modified to phosphoserine: Ser-304, Ser-306, Ser-329, Ser-331, Ser-341, Ser-349, Ser-354, and Ser-369. A compositionally biased stretch (basic and acidic residues) spans 321–331 (AGRKPWERSNS). The required for interaction with ZDHHC17 stretch occupies residues 342–362 (RTPSVAKSPEAKSPLQSQPHS). The segment at 379–413 (DLDRMKQEILEEVVRELHKVKEEIIDAIRQELSGI) is EVH2 block C.

This sequence belongs to the Ena/VASP family. Homotetramer. Binds to the SH3 domains of ABL1, LYN and SRC. Also binds to profilin, with preference for isoform IIa of PFN2, and the WW domain of APBB1/FE65. Binds to SEMA6A. Interacts, via the Pro-rich region, with the C-terminal SH3 domain of DNMBP. Interacts with RAPH1. Binds, via the EVH1 domain, the Pro-rich domain of Listeria monocytogenes actA. Binds, via the EVH1 domain, the Pro-rich domain of ZYX. Interacts with FYB1. Interacts with ZDHHC17. Phosphorylated by PKA; phosphorylation abolishes binding to SH3 domains of ABL and SRC.

The protein resides in the cytoplasm. The protein localises to the cytoskeleton. It localises to the stress fiber. Its subcellular location is the cell projection. It is found in the lamellipodium. Ena/VASP proteins are actin-associated proteins involved in a range of processes dependent on cytoskeleton remodeling and cell polarity such as axon guidance and lamellipodial and filopodial dynamics in migrating cells. EVL enhances actin nucleation and polymerization. The protein is Ena/VASP-like protein (EVL) of Homo sapiens (Human).